Here is a 534-residue protein sequence, read N- to C-terminus: Cytochrome P450 monooxygenase ascG (534 aa).

The chain crosses the membrane as a helical span at residues Phe13–Ile33. A glycan (N-linked (GlcNAc...) asparagine) is linked at Asn466. Cys469 contributes to the heme binding site.

The protein belongs to the cytochrome P450 family. Heme serves as cofactor.

The protein resides in the membrane. The catalysed reaction is ilicicolin C + NADPH + O2 + H(+) = ascochlorin + NADP(+) + 2 H2O. The protein operates within secondary metabolite biosynthesis; terpenoid biosynthesis. Functionally, cytochrome P450 monooxygenase; part of the asc-1 gene cluster that mediates the biosynthesis of both ascochlorin and ascofuranone, a strong inhibitor of cyanide-insensitive alternative oxidases and a promising drug candidate against African trypanosomiasis. The first step in the pathway is performed by the non-reducing polyketide synthase ascC that produces orsellinic acid by condensing acetyl-CoA with 3 malonyl-CoA units. Orsellinic acid is then prenylated by the prenyltransferase ascA to yield ilicicolinic acid B. Ilicicolinic acid B is further reduced to ilicicolin B by the reductase ascB. The halogenase ascD then chlorinates ilicicolin B to produce ilicicolin A which is converted to ilicicolin A epoxide by the cytochrome P450 monooxygenase ascE that catalyzes stereoselective epoxidation of the terminal double bond of the prenyl group. Ilicicolin A epoxide is the last common precursor for the biosynthesis of ascofuranone and ascochlorin. The terpene cyclase ascF produces a monocyclic terpene, and the cyclization reaction is proposed to be initiated by protonation of the terminal epoxide of ilicicolin A epoxide to generate a monocyclic tertiarycation, which is followed by a series of hydride and methyl shifts with abstraction of proton, leading to the formation of the (14S,15R,19R)-trimethylcyclohexanone ring structure of ilicicolin C, which is finally reduced to ascochlorin by the dehydrogenase ascG. On the other hand, ilicicolin A epoxide is hydroxylated by the cytochrome P450 monooxygenase ascH, and the resultant product is cyclized by the terpene cyclase ascI to ascofuranol via protonation-initiated epoxide ring opening, which facilitates the 6-endo-tet cyclization to form the tetrahy-drofuran ring. Finally, ascofuranol is oxidized into ascofuranone by ascJ. The protein is Cytochrome P450 monooxygenase ascG of Acremonium egyptiacum (Oospora egyptiaca).